The following is a 433-amino-acid chain: Serine hydroxymethyltransferase (433 aa).

Position 121–123 (121–123 (AHV)) interacts with (6S)-5,6,7,8-tetrahydrofolate. K227 carries the N6-(pyridoxal phosphate)lysine modification. Position 243 (E243) interacts with (6S)-5,6,7,8-tetrahydrofolate.

Belongs to the SHMT family. In terms of assembly, homodimer. Requires pyridoxal 5'-phosphate as cofactor.

It localises to the cytoplasm. The enzyme catalyses 5,10-methylenetetrahydrosulfopterin + glycine + H2O = tetrahydrosulfopterin + L-serine. It functions in the pathway amino-acid biosynthesis; glycine biosynthesis; glycine from L-serine: step 1/1. Its activity is regulated as follows. Is completely inhibited by addition of NaCNBH(3) in vitro; this reagent is a known inhibitor of PLP enzymes, that reduces the internal aldimine of PLP to the catalytically inactive and stable secondary amine. Is also inhibited by L-cysteine, which forms a thiazolidine complex with the active site PLP. Its function is as follows. Catalyzes the reversible interconversion of serine and glycine with the modified folate sulfopterin serving as the one-carbon carrier. Cannot use tetrahydrofolate (THF or H4PteGlu) as the pteridine substrate. Also exhibits a pteridine-independent aldolase activity toward beta-hydroxyamino acids, producing glycine and aldehydes, via a retro-aldol mechanism. Thus, is able to catalyze the cleavage of both allo-threonine and beta-phenylserine. The protein is Serine hydroxymethyltransferase of Saccharolobus solfataricus (strain ATCC 35092 / DSM 1617 / JCM 11322 / P2) (Sulfolobus solfataricus).